The chain runs to 342 residues: NLP effector protein Pc107869 (342 aa).

A signal peptide spans 1 to 19; that stretch reads MKTGFFLFAACAALVAVQA. Asn-24 is a glycosylation site (N-linked (GlcNAc...) asparagine). Residues 41–125 are disordered; it reads APRTKAPPTK…PTPDPGPWEA (85 aa). Residues 55–75 are compositionally biased toward low complexity; that stretch reads QQSSLSGSQEQQQEQIETPAP. The segment covering 93–121 has biased composition (pro residues); that stretch reads TPAPTPAPTPAPTPAPTPAPTPAPTPDPG. The Hepta-peptide GHRHDWE motif signature appears at 226 to 232; sequence GHRHDWE.

The protein belongs to the Necrosis inducing protein (NPP1) family.

The protein localises to the secreted. In terms of biological role, secreted effector that contributes strongly to virulence during infection by P.capsici. Induces cell death in the Solanaceae, including Nicotiana benthamiana. The sequence is that of NLP effector protein Pc107869 from Phytophthora capsici.